The chain runs to 186 residues: Ribosome-recycling factor (186 aa).

Belongs to the RRF family.

The protein resides in the cytoplasm. Responsible for the release of ribosomes from messenger RNA at the termination of protein biosynthesis. May increase the efficiency of translation by recycling ribosomes from one round of translation to another. This chain is Ribosome-recycling factor, found in Cupriavidus necator (strain ATCC 17699 / DSM 428 / KCTC 22496 / NCIMB 10442 / H16 / Stanier 337) (Ralstonia eutropha).